The primary structure comprises 180 residues: Shikimate kinase (180 aa).

14–19 (GAGKSC) lines the ATP pocket. S18 serves as a coordination point for Mg(2+). Positions 36, 60, and 82 each coordinate substrate. Residue R120 participates in ATP binding. R139 contributes to the substrate binding site.

It belongs to the shikimate kinase family. As to quaternary structure, monomer. Mg(2+) is required as a cofactor.

The protein localises to the cytoplasm. The catalysed reaction is shikimate + ATP = 3-phosphoshikimate + ADP + H(+). It participates in metabolic intermediate biosynthesis; chorismate biosynthesis; chorismate from D-erythrose 4-phosphate and phosphoenolpyruvate: step 5/7. In terms of biological role, catalyzes the specific phosphorylation of the 3-hydroxyl group of shikimic acid using ATP as a cosubstrate. The protein is Shikimate kinase of Xanthomonas campestris pv. campestris (strain 8004).